Reading from the N-terminus, the 240-residue chain is MGKTQPLPILITGGGRRIGLALAWHFINQKQPVIVSYRTHYPAIDGLINAGAQCIQADFSTNDGVMAFADEVLKSTHGLRAILHNASAWMAEKPGAPLADVLACMMQIHVNTPYLLNHALERLLRGHGHAASDIIHFTDYVVERGSDKHIAYAASKAALDNMTRSFARKLAPEVKVNSIAPSLILFNEHDDAEYRQQALNKSLMKTAPGEKEVIDLVDYLLTSCFVTGRSFPLDGGRHLR.

Y152 acts as the Proton acceptor in catalysis.

The protein belongs to the short-chain dehydrogenases/reductases (SDR) family. FolM subfamily.

It carries out the reaction (6S)-5,6,7,8-tetrahydrofolate + NADP(+) = 7,8-dihydrofolate + NADPH + H(+). It catalyses the reaction 7,8-dihydromonapterin + NADPH + H(+) = 5,6,7,8-tetrahydromonapterin + NADP(+). In terms of biological role, catalyzes the reduction of dihydromonapterin to tetrahydromonapterin. Also has lower activity with dihydrofolate. The polypeptide is Dihydromonapterin reductase (folM) (Escherichia coli O157:H7).